The primary structure comprises 301 residues: Nitric oxide synthase-interacting protein (301 aa).

A Phosphoserine modification is found at Ser36. The tract at residues Asp55–Leu75 is U-box-like. A Nuclear localization signal motif is present at residues Lys78–Glu101. Ser107 carries the phosphoserine modification. The segment at Lys132–Lys157 is disordered.

It belongs to the NOSIP family. Interacts with NOS1 and NOS3. Interacts with PP2A holoenzyme, containing PPP2CA, PPP2CB, PPP2R1A and PPP2R2A subunits. In terms of tissue distribution, expressed in heart, brain and lung. Present in endothelial cells (at protein level).

Its subcellular location is the cytoplasm. It localises to the nucleus. It carries out the reaction S-ubiquitinyl-[E2 ubiquitin-conjugating enzyme]-L-cysteine + [acceptor protein]-L-lysine = [E2 ubiquitin-conjugating enzyme]-L-cysteine + N(6)-ubiquitinyl-[acceptor protein]-L-lysine.. Functionally, E3 ubiquitin-protein ligase that is essential for proper development of the forebrain, the eye, and the face. Catalyzes monoubiquitination of serine/threonine-protein phosphatase 2A (PP2A) catalytic subunit PPP2CA/PPP2CB. Negatively regulates nitric oxide production by inducing NOS1 and NOS3 translocation to actin cytoskeleton and inhibiting their enzymatic activity. This chain is Nitric oxide synthase-interacting protein (NOSIP), found in Homo sapiens (Human).